A 206-amino-acid chain; its full sequence is ATP phosphoribosyltransferase (206 aa).

The protein belongs to the ATP phosphoribosyltransferase family. Short subfamily. As to quaternary structure, heteromultimer composed of HisG and HisZ subunits.

The protein localises to the cytoplasm. It carries out the reaction 1-(5-phospho-beta-D-ribosyl)-ATP + diphosphate = 5-phospho-alpha-D-ribose 1-diphosphate + ATP. It participates in amino-acid biosynthesis; L-histidine biosynthesis; L-histidine from 5-phospho-alpha-D-ribose 1-diphosphate: step 1/9. In terms of biological role, catalyzes the condensation of ATP and 5-phosphoribose 1-diphosphate to form N'-(5'-phosphoribosyl)-ATP (PR-ATP). Has a crucial role in the pathway because the rate of histidine biosynthesis seems to be controlled primarily by regulation of HisG enzymatic activity. The protein is ATP phosphoribosyltransferase of Wolinella succinogenes (strain ATCC 29543 / DSM 1740 / CCUG 13145 / JCM 31913 / LMG 7466 / NCTC 11488 / FDC 602W) (Vibrio succinogenes).